Here is a 327-residue protein sequence, read N- to C-terminus: Nuclear apoptosis-inducing factor 1 (327 aa).

A required for nuclear localization and apoptosis-inducing activity region spans residues 1 to 70 (MAVPAKKRKM…CRRELPEVKK (70 aa)). A compositionally biased stretch (low complexity) spans 87 to 98 (RAAVEGGEAPGP). Disordered regions lie at residues 87-118 (RAAV…GGGP) and 303-327 (NTAN…SIIQ). A compositionally biased stretch (gly residues) spans 104 to 118 (AGGPGTGGGSGGGGP). A compositionally biased stretch (polar residues) spans 316–327 (VAQNGQPDSIIQ).

The protein belongs to the NAIF1 family. Interacts with HARBI1. As to expression, widely expressed.

The protein localises to the nucleus. Functionally, induces apoptosis. This Homo sapiens (Human) protein is Nuclear apoptosis-inducing factor 1 (NAIF1).